The following is a 197-amino-acid chain: Proteasome subunit beta 1 (197 aa).

The propeptide at 1–6 is removed in mature form; by autocatalysis; it reads MNRKTG. The Nucleophile role is filled by threonine 7.

The protein belongs to the peptidase T1B family. In terms of assembly, the 20S proteasome core is composed of 14 alpha and 14 beta subunits that assemble into four stacked heptameric rings, resulting in a barrel-shaped structure. The two inner rings, each composed of seven catalytic beta subunits, are sandwiched by two outer rings, each composed of seven alpha subunits. The catalytic chamber with the active sites is on the inside of the barrel. Has a gated structure, the ends of the cylinder being occluded by the N-termini of the alpha-subunits. Is capped at one or both ends by the proteasome regulatory ATPase, PAN.

Its subcellular location is the cytoplasm. It catalyses the reaction Cleavage of peptide bonds with very broad specificity.. With respect to regulation, the formation of the proteasomal ATPase PAN-20S proteasome complex, via the docking of the C-termini of PAN into the intersubunit pockets in the alpha-rings, triggers opening of the gate for substrate entry. Interconversion between the open-gate and close-gate conformations leads to a dynamic regulation of the 20S proteasome proteolysis activity. Its function is as follows. Component of the proteasome core, a large protease complex with broad specificity involved in protein degradation. This is Proteasome subunit beta 1 from Pyrococcus horikoshii (strain ATCC 700860 / DSM 12428 / JCM 9974 / NBRC 100139 / OT-3).